Reading from the N-terminus, the 122-residue chain is Lithostathine (122 aa).

An N-terminal signal peptide occupies residues 1-26; it reads MLPSMSLPSLXWMLLSCLMLLSQVQG. Positions 27 to 37 are excised as a propeptide; the sequence is EDSPADTPSAR. One can recognise a C-type lectin domain in the interval 38–122; the sequence is ISCPKGSMAY…LEPNAGGWEW (85 aa). A disulfide bond links Cys-40 and Cys-51.

Cleaved to give an A chain and a B chain joined by a disulfide bond. In terms of tissue distribution, in pancreatic acinar cells.

It is found in the secreted. Functionally, might act as an inhibitor of spontaneous calcium carbonate precipitation. This is Lithostathine (PTP) from Sus scrofa (Pig).